We begin with the raw amino-acid sequence, 567 residues long: Arginine--tRNA ligase (567 aa).

The 'HIGH' region signature appears at 121–131 (ANPNGPLHVGH).

Belongs to the class-I aminoacyl-tRNA synthetase family.

It localises to the cytoplasm. The enzyme catalyses tRNA(Arg) + L-arginine + ATP = L-arginyl-tRNA(Arg) + AMP + diphosphate. This chain is Arginine--tRNA ligase, found in Methanosarcina acetivorans (strain ATCC 35395 / DSM 2834 / JCM 12185 / C2A).